The sequence spans 320 residues: Histidine decarboxylase proenzyme (320 aa).

Positions 2-11 (NKNLEANRNR) are excised as a propeptide. Serine 98 carries the pyruvic acid (Ser) modification. Catalysis depends on glutamate 215, which acts as the Proton donor.

The proenzyme is a hexamer of identical pi chains; each pi chain monomer is cleaved to form a small (or beta) chain and a large (or alpha) chain by non-hydrolytic self-catalysis. Pyruvate serves as cofactor.

The catalysed reaction is L-histidine + H(+) = histamine + CO2. The polypeptide is Histidine decarboxylase proenzyme (hdc) (Clostridium perfringens (strain ATCC 13124 / DSM 756 / JCM 1290 / NCIMB 6125 / NCTC 8237 / Type A)).